The chain runs to 881 residues: Alanine--tRNA ligase (881 aa).

The Zn(2+) site is built by His566, His570, Cys668, and His672.

The protein belongs to the class-II aminoacyl-tRNA synthetase family. Zn(2+) is required as a cofactor.

The protein localises to the cytoplasm. It carries out the reaction tRNA(Ala) + L-alanine + ATP = L-alanyl-tRNA(Ala) + AMP + diphosphate. Its function is as follows. Catalyzes the attachment of alanine to tRNA(Ala) in a two-step reaction: alanine is first activated by ATP to form Ala-AMP and then transferred to the acceptor end of tRNA(Ala). Also edits incorrectly charged Ser-tRNA(Ala) and Gly-tRNA(Ala) via its editing domain. This is Alanine--tRNA ligase from Frankia casuarinae (strain DSM 45818 / CECT 9043 / HFP020203 / CcI3).